The following is a 429-amino-acid chain: Histidine--tRNA ligase (429 aa).

The protein belongs to the class-II aminoacyl-tRNA synthetase family. Homodimer.

Its subcellular location is the cytoplasm. It carries out the reaction tRNA(His) + L-histidine + ATP = L-histidyl-tRNA(His) + AMP + diphosphate + H(+). In Pseudomonas syringae pv. syringae (strain B728a), this protein is Histidine--tRNA ligase.